A 204-amino-acid chain; its full sequence is Somatotropin (204 aa).

Positions 1-17 are cleaved as a signal peptide; that stretch reads MDRVLLLLSVLTLGVSS. Position 18 is a pyrrolidone carboxylic acid (Q18). Residue H36 coordinates Zn(2+). A disulfide bridge connects residues C69 and C177. E186 serves as a coordination point for Zn(2+). C194 and C202 are disulfide-bonded.

This sequence belongs to the somatotropin/prolactin family.

The protein localises to the secreted. Its function is as follows. Growth hormone plays an important role in growth control and is involved in the regulation of several anabolic processes. Implicated as an osmoregulatory substance important for seawater adaptation. The sequence is that of Somatotropin (gh) from Larimichthys crocea (Large yellow croaker).